Reading from the N-terminus, the 134-residue chain is Transcription antitermination protein NusB (134 aa).

Belongs to the NusB family.

Its function is as follows. Involved in transcription antitermination. Required for transcription of ribosomal RNA (rRNA) genes. Binds specifically to the boxA antiterminator sequence of the ribosomal RNA (rrn) operons. This chain is Transcription antitermination protein NusB, found in Shewanella baltica (strain OS223).